Reading from the N-terminus, the 116-residue chain is T cell receptor alpha variable 14/delta variable 4 (116 aa).

The signal sequence occupies residues 1–21 (MSLSSLLKVVTASLWLGPGIA). The region spanning 22–116 (QKITQTQPGM…SAMYFCAMRE (95 aa)) is the Ig-like domain. A disulfide bond links cysteine 43 and cysteine 112. Asparagine 78 carries N-linked (GlcNAc...) asparagine glycosylation.

Alpha-beta TR is a heterodimer composed of an alpha and beta chain; disulfide-linked. The alpha-beta TR is associated with the transmembrane signaling CD3 coreceptor proteins to form the TR-CD3 (TcR or TCR). The assembly of alpha-beta TR heterodimers with CD3 occurs in the endoplasmic reticulum where a single alpha-beta TR heterodimer associates with one CD3D-CD3E heterodimer, one CD3G-CD3E heterodimer and one CD247 homodimer forming a stable octameric structure. CD3D-CD3E and CD3G-CD3E heterodimers preferentially associate with TR alpha and TR beta chains, respectively. The association of the CD247 homodimer is the last step of TcR assembly in the endoplasmic reticulum and is required for transport to the cell surface.

It is found in the cell membrane. Its function is as follows. V region of the variable domain of T cell receptor (TR) alpha chain that participates in the antigen recognition. Alpha-beta T cell receptors are antigen specific receptors which are essential to the immune response and are present on the cell surface of T lymphocytes. Recognize peptide-major histocompatibility (MH) (pMH) complexes that are displayed by antigen presenting cells (APC), a prerequisite for efficient T cell adaptive immunity against pathogens. Binding of alpha-beta TR to pMH complex initiates TR-CD3 clustering on the cell surface and intracellular activation of LCK that phosphorylates the ITAM motifs of CD3G, CD3D, CD3E and CD247 enabling the recruitment of ZAP70. In turn ZAP70 phosphorylates LAT, which recruits numerous signaling molecules to form the LAT signalosome. The LAT signalosome propagates signal branching to three major signaling pathways, the calcium, the mitogen-activated protein kinase (MAPK) kinase and the nuclear factor NF-kappa-B (NF-kB) pathways, leading to the mobilization of transcription factors that are critical for gene expression and essential for T cell growth and differentiation. The T cell repertoire is generated in the thymus, by V-(D)-J rearrangement. This repertoire is then shaped by intrathymic selection events to generate a peripheral T cell pool of self-MH restricted, non-autoaggressive T cells. Post-thymic interaction of alpha-beta TR with the pMH complexes shapes TR structural and functional avidity. In Homo sapiens (Human), this protein is T cell receptor alpha variable 14/delta variable 4.